The following is a 75-amino-acid chain: Protein RALF-like 9 (75 aa).

Residues 1–28 form the signal peptide; it reads MGMSKSIKVILSLALVVFLALAATKVEA. 2 cysteine pairs are disulfide-bonded: Cys-46–Cys-54 and Cys-66–Cys-72.

This sequence belongs to the plant rapid alkalinization factor (RALF) family.

The protein resides in the secreted. Functionally, cell signaling peptide that may regulate plant stress, growth, and development. Mediates a rapid alkalinization of extracellular space by mediating a transient increase in the cytoplasmic Ca(2+) concentration leading to a calcium-dependent signaling events through a cell surface receptor and a concomitant activation of some intracellular mitogen-activated protein kinases. The polypeptide is Protein RALF-like 9 (RALFL9) (Arabidopsis thaliana (Mouse-ear cress)).